Reading from the N-terminus, the 153-residue chain is Small ribosomal subunit protein bS16 (153 aa).

A disordered region spans residues 114–153 (ENEPVGEAITPKKKKAKAEDAEAAADAPAEAAAESEAADK). Residues 137-153 (AADAPAEAAAESEAADK) are compositionally biased toward low complexity.

The protein belongs to the bacterial ribosomal protein bS16 family.

This Rhodococcus jostii (strain RHA1) protein is Small ribosomal subunit protein bS16.